We begin with the raw amino-acid sequence, 642 residues long: Kinesin-2b (642 aa).

Residues 12–344 (NVMVMVRVRP…LRYADRAKQI (333 aa)) enclose the Kinesin motor domain. ATP is bound at residue 107–114 (GQTGSGKT). The ADP site is built by G110, G112, K113, and T114. Residue T114 coordinates Mg(2+). A coiled-coil region spans residues 415–475 (VQSLRKNLDK…ERKAKERQLM (61 aa)).

It belongs to the TRAFAC class myosin-kinesin ATPase superfamily. Kinesin family. Kinesin II subfamily.

It is found in the cell projection. Its subcellular location is the cilium. The protein localises to the flagellum. The protein resides in the cytoplasm. It localises to the cytoskeleton. It is found in the flagellum axoneme. Its subcellular location is the flagellum basal body. Functionally, involved in anterograde intraflagellar transport (IFT). Involved in flagellar assembly. The protein is Kinesin-2b of Giardia intestinalis (strain ATCC 50803 / WB clone C6) (Giardia lamblia).